Consider the following 235-residue polypeptide: TIR domain-containing adapter molecule 2 (235 aa).

The interval 1 to 39 (MGIGKSKINSCPLSLSWGKRHSVDTSPGYHESDSKKSED) is disordered. Glycine 2 is lipidated: N-myristoyl glycine. A Phosphoserine; by PKC/PRKCE modification is found at serine 16. Over residues 30–39 (HESDSKKSED) the composition is skewed to basic and acidic residues. The TIR domain maps to 73-229 (AEEEVFLKFV…TIWKETRNMV (157 aa)). Residue tyrosine 167 is modified to Phosphotyrosine.

Homodimer. Interacts with TLR4, TICAM1, IRF3 and IRF7 in response to LPS. Interacts with IL1R1, IL1RAP, IRAK2, IRAK3 and TRAF6. Interacts with protein kinase-inactive mutants of IRAK1 and IRAK4. Isoform 1 interacts with isoform 2; the interaction occurs in late endosomes and disrupts the interaction between isoform 1 and TICAM1. Interacts with MYD88; the interaction decreases after IL-18 stimulation in a time-dependent manner. Interacts with IL18R1 and IL18RAP. Interacts with TLR2. Interacts with RAB11FIP2. Post-translationally, phosphorylated by PRKCE in response to LPS. Phosphorylation is essential for its function. It is depleted from the membrane upon phosphorylation. Tyrosine phosphorylation is inhibited by phosphatase PTPN4. In terms of processing, isoform 1 is myristoylated. Required for membrane association which is critical for its ability to initiate efficient signaling. In terms of tissue distribution, expressed in spleen, prostate, testis, uterus, small intestine, colon, peripheral blood leukocytes, heart, placenta, lung, liver, skeletal muscle, and pancreas Isoform 2 is ubiquitously expressed (at lower levels than isoform 1).

The protein localises to the cytoplasm. The protein resides in the golgi apparatus. Its subcellular location is the cell membrane. It localises to the endoplasmic reticulum. It is found in the early endosome membrane. The protein localises to the late endosome membrane. The protein resides in the cell projection. Its subcellular location is the phagocytic cup. In terms of biological role, functions as a sorting adapter in different signaling pathways to facilitate downstream signaling leading to type I interferon induction. In TLR4 signaling, physically bridges TLR4 and TICAM1 and functionally transmits signal to TICAM1 in early endosomes after endocytosis of TLR4. In TLR2 signaling, physically bridges TLR2 and MYD88 and is required for the TLR2-dependent movement of MYD88 to endosomes following ligand engagement. Involved in IL-18 signaling and is proposed to function as a sorting adapter for MYD88 in IL-18 signaling during adaptive immune response. Forms a complex with RAB11FIP2 that is recruited to the phagosomes to promote the activation of the actin-regulatory GTPases RAC1 and CDC42 and subsequent phagocytosis of Gram-negative bacteria. Proposed to inhibit LPS-TLR4 signaling at the late endosome by interaction with isoform 1 thereby disrupting the association of isoform 1 with TICAM1. May be involved in TLR4 degradation in late endosomes. This Homo sapiens (Human) protein is TIR domain-containing adapter molecule 2 (TICAM2).